The following is a 158-amino-acid chain: Transcriptional repressor NrdR (158 aa).

The segment at 1 to 22 is disordered; that stretch reads MRCPYCGSEDTQVKDSRPAEDN. A zinc finger lies at 3-34; sequence CPYCGSEDTQVKDSRPAEDNTSIRRRRICPDC. The span at 11-22 shows a compositional bias: basic and acidic residues; the sequence is TQVKDSRPAEDN. The 91-residue stretch at 49–139 folds into the ATP-cone domain; sequence LMVIKKTGRK…VYRDFSHAED (91 aa).

This sequence belongs to the NrdR family. Zn(2+) is required as a cofactor.

In terms of biological role, negatively regulates transcription of bacterial ribonucleotide reductase nrd genes and operons by binding to NrdR-boxes. This Rhizobium rhizogenes (strain K84 / ATCC BAA-868) (Agrobacterium radiobacter) protein is Transcriptional repressor NrdR.